The chain runs to 406 residues: Isocitrate dehydrogenase [NADP] (406 aa).

NADP(+) contacts are provided by lysine 72, threonine 75, threonine 77, and arginine 82. D-threo-isocitrate is bound by residues serine 94, asparagine 96, arginine 100, glutamate 110, and arginine 132. Aspartate 250, aspartate 273, and aspartate 277 together coordinate Mn(2+). NADP(+) contacts are provided by glycine 308, threonine 309, valine 310, histidine 313, and asparagine 326.

This sequence belongs to the isocitrate and isopropylmalate dehydrogenases family. As to quaternary structure, homodimer. The cofactor is Mg(2+). Mn(2+) serves as cofactor.

It catalyses the reaction D-threo-isocitrate + NADP(+) = 2-oxoglutarate + CO2 + NADPH. Its function is as follows. Catalyzes the oxidative decarboxylation of isocitrate to 2-oxoglutarate and carbon dioxide with the concomitant reduction of NADP(+). The chain is Isocitrate dehydrogenase [NADP] (icd) from Sphingobium yanoikuyae (Sphingomonas yanoikuyae).